Reading from the N-terminus, the 190-residue chain is UPF0200 protein TSIB_0920 (190 aa).

7–14 (GMPGSGKG) lines the ATP pocket.

Belongs to the UPF0200 family.

The protein is UPF0200 protein TSIB_0920 of Thermococcus sibiricus (strain DSM 12597 / MM 739).